The following is a 315-amino-acid chain: Aspartate carbamoyltransferase catalytic subunit (315 aa).

Residues arginine 55 and threonine 56 each coordinate carbamoyl phosphate. Lysine 83 serves as a coordination point for L-aspartate. Carbamoyl phosphate contacts are provided by arginine 105, histidine 138, and glutamine 141. L-aspartate contacts are provided by arginine 171 and arginine 225. Positions 266 and 267 each coordinate carbamoyl phosphate.

This sequence belongs to the aspartate/ornithine carbamoyltransferase superfamily. ATCase family. As to quaternary structure, heterododecamer (2C3:3R2) of six catalytic PyrB chains organized as two trimers (C3), and six regulatory PyrI chains organized as three dimers (R2).

The catalysed reaction is carbamoyl phosphate + L-aspartate = N-carbamoyl-L-aspartate + phosphate + H(+). It functions in the pathway pyrimidine metabolism; UMP biosynthesis via de novo pathway; (S)-dihydroorotate from bicarbonate: step 2/3. Catalyzes the condensation of carbamoyl phosphate and aspartate to form carbamoyl aspartate and inorganic phosphate, the committed step in the de novo pyrimidine nucleotide biosynthesis pathway. This is Aspartate carbamoyltransferase catalytic subunit from Mycolicibacterium vanbaalenii (strain DSM 7251 / JCM 13017 / BCRC 16820 / KCTC 9966 / NRRL B-24157 / PYR-1) (Mycobacterium vanbaalenii).